A 196-amino-acid polypeptide reads, in one-letter code: FMN-dependent NADH:quinone oxidoreductase (196 aa).

Serine 10 is an FMN binding site.

The protein belongs to the azoreductase type 1 family. As to quaternary structure, homodimer. FMN serves as cofactor.

It carries out the reaction 2 a quinone + NADH + H(+) = 2 a 1,4-benzosemiquinone + NAD(+). The catalysed reaction is N,N-dimethyl-1,4-phenylenediamine + anthranilate + 2 NAD(+) = 2-(4-dimethylaminophenyl)diazenylbenzoate + 2 NADH + 2 H(+). In terms of biological role, quinone reductase that provides resistance to thiol-specific stress caused by electrophilic quinones. Its function is as follows. Also exhibits azoreductase activity. Catalyzes the reductive cleavage of the azo bond in aromatic azo compounds to the corresponding amines. This chain is FMN-dependent NADH:quinone oxidoreductase, found in Cereibacter sphaeroides (strain ATCC 17029 / ATH 2.4.9) (Rhodobacter sphaeroides).